Consider the following 340-residue polypeptide: Phenylalanine--tRNA ligase alpha subunit (340 aa).

E255 provides a ligand contact to Mg(2+).

Belongs to the class-II aminoacyl-tRNA synthetase family. Phe-tRNA synthetase alpha subunit type 1 subfamily. Tetramer of two alpha and two beta subunits. Requires Mg(2+) as cofactor.

The protein resides in the cytoplasm. It catalyses the reaction tRNA(Phe) + L-phenylalanine + ATP = L-phenylalanyl-tRNA(Phe) + AMP + diphosphate + H(+). This Desulfitobacterium hafniense (strain DSM 10664 / DCB-2) protein is Phenylalanine--tRNA ligase alpha subunit.